Reading from the N-terminus, the 333-residue chain is Procathepsin L (333 aa).

Positions 1–17 (MNPTFILAALCLGIASA) are cleaved as a signal peptide. The propeptide at 18–113 (TLTFNHSLEA…KVFQEPLFYE (96 aa)) is activation peptide. Glu122 serves as a coordination point for Zn(2+). Intrachain disulfides connect Cys135–Cys178 and Cys169–Cys211. Cys138 is an active-site residue. Residues Glu163, Asp184, Glu199, Glu205, Glu209, Asp227, Asp250, His253, Asp273, and Asp275 each coordinate Zn(2+). An intrachain disulfide couples Cys269 to Cys322. Residue His276 is part of the active site. A propeptide spanning residues 289–291 (ESD) is cleaved from the precursor. Asn300 is an active-site residue.

Belongs to the peptidase C1 family. Dimer of a heavy and a light chain linked by disulfide bonds. Interacts with Long isoform of CD74/Ii chain; the interaction stabilizes the conformation of mature CTSL. Post-translationally, during export along the endocytic pathway, pro-CTSL undergoes several proteolytic cleavages to generate the CTSL single-chain and two-chain mature forms, composed of a heavy chain linked to a light chain by disulfide bonds. Autocleavage; produces the single-chain CTSL after cleavage of the propeptide. The cleavage can be intermolecular.

It localises to the lysosome. The protein localises to the apical cell membrane. It is found in the cytoplasmic vesicle. The protein resides in the secretory vesicle. Its subcellular location is the chromaffin granule. It localises to the secreted. The protein localises to the extracellular space. The enzyme catalyses Specificity close to that of papain. As compared to cathepsin B, cathepsin L exhibits higher activity toward protein substrates, but has little activity on Z-Arg-Arg-NHMec, and no peptidyl-dipeptidase activity.. With respect to regulation, inhibited by the propeptide produced by autocleavage. Long isoform of CD74/Ii chain stabilizes the conformation of mature CTSL by binding to its active site and serving as a chaperone to help maintain a pool of mature enzyme in endocytic compartments and extracellular space of APCs. IFNG enhances the conversion into the CTSL mature and active form. Inhibited by CST6. Inhibited by the glycopeptide antibiotic teicoplanin. Inhibited by amantadine. Its function is as follows. Thiol protease important for the overall degradation of proteins in lysosomes. Plays a critical for normal cellular functions such as general protein turnover, antigen processing and bone remodeling. Involved in the solubilization of cross-linked TG/thyroglobulin and in the subsequent release of thyroid hormone thyroxine (T4) by limited proteolysis of TG/thyroglobulin in the thyroid follicle lumen. In neuroendocrine chromaffin cells secretory vesicles, catalyzes the prohormone proenkephalin processing to the active enkephalin peptide neurotransmitter. In thymus, regulates CD4(+) T cell positive selection by generating the major histocompatibility complex class II (MHCII) bound peptide ligands presented by cortical thymic epithelial cells. Also mediates invariant chain processing in cortical thymic epithelial cells. Major elastin-degrading enzyme at neutral pH. Accumulates as a mature and active enzyme in the extracellular space of antigen presenting cells (APCs) to regulate degradation of the extracellular matrix in the course of inflammation. Secreted form generates endostatin from COL18A1. Critical for cardiac morphology and function. Plays an important role in hair follicle morphogenesis and cycling, as well as epidermal differentiation. Required for maximal stimulation of steroidogenesis by TIMP1. This is Procathepsin L (CTSL) from Chlorocebus aethiops (Green monkey).